The primary structure comprises 728 residues: Propionyl-CoA carboxylase alpha chain, mitochondrial (728 aa).

The transit peptide at 1 to 52 directs the protein to the mitochondrion; the sequence is MAGFWVGTAPLVAAGRRGRWPPQQLMLSAALRTLKHVLYYSRQCLMVSRNLG. The 448-residue stretch at 62-509 folds into the Biotin carboxylation domain; sequence TFDKILVANR…STKFLSDVYP (448 aa). An N6-acetyllysine; alternate modification is found at K65. N6-succinyllysine; alternate is present on K65. K119 is subject to N6-succinyllysine. K150 is modified (N6-acetyllysine; alternate). Residue K150 is modified to N6-succinyllysine; alternate. Residue K177 participates in ATP binding. An ATP-grasp domain is found at 181-378; it reads KLLAKKAEVN…LVQEMIRVAK (198 aa). K200 carries the N6-acetyllysine; alternate modification. K200 is modified (N6-succinyllysine; alternate). ATP-binding positions include 209 to 270, E261, and N296; that span reads AREI…PRHI. S252 carries the phosphoserine modification. Residue K262 is modified to N6-succinyllysine. K328 carries the post-translational modification N6-acetyllysine; alternate. An N6-succinyllysine; alternate modification is found at K328. 3 residues coordinate Mg(2+): E336, E349, and N351. Mn(2+) is bound by residues E336, E349, and N351. Residue E349 is part of the active site. N6-succinyllysine is present on residues K385 and K407. F409 serves as a coordination point for biotin. K496 carries the N6-acetyllysine modification. K502, K513, and K648 each carry N6-succinyllysine. In terms of domain architecture, Biotinyl-binding spans 653 to 728; sequence KVTEDTSSVL…GEGDLLVELE (76 aa). K694 bears the N6-biotinyllysine; by HLCS mark.

As to quaternary structure, the holoenzyme is a dodecamer composed of 6 PCCA/alpha subunits and 6 PCCB/beta subunits. Interacts (via the biotin carboxylation domain) with SIRT4. Interacts with SIRT3 and SIRT5. Mg(2+) serves as cofactor. Mn(2+) is required as a cofactor. The cofactor is biotin. In terms of processing, acetylated. The biotin cofactor is covalently attached to the C-terminal biotinyl-binding domain and is required for the catalytic activity. Biotinylation is catalyzed by HLCS.

It localises to the mitochondrion matrix. It carries out the reaction propanoyl-CoA + hydrogencarbonate + ATP = (S)-methylmalonyl-CoA + ADP + phosphate + H(+). The enzyme catalyses butanoyl-CoA + hydrogencarbonate + ATP = (2S)-ethylmalonyl-CoA + ADP + phosphate + H(+). It participates in metabolic intermediate metabolism; propanoyl-CoA degradation; succinyl-CoA from propanoyl-CoA: step 1/3. Functionally, this is one of the 2 subunits of the biotin-dependent propionyl-CoA carboxylase (PCC), a mitochondrial enzyme involved in the catabolism of odd chain fatty acids, branched-chain amino acids isoleucine, threonine, methionine, and valine and other metabolites. Propionyl-CoA carboxylase catalyzes the carboxylation of propionyl-CoA/propanoyl-CoA to D-methylmalonyl-CoA/(S)-methylmalonyl-CoA. Within the holoenzyme, the alpha subunit catalyzes the ATP-dependent carboxylation of the biotin carried by the biotin carboxyl carrier (BCC) domain, while the beta subunit then transfers the carboxyl group from carboxylated biotin to propionyl-CoA. Propionyl-CoA carboxylase also significantly acts on butyryl-CoA/butanoyl-CoA, which is converted to ethylmalonyl-CoA/(2S)-ethylmalonyl-CoA at a much lower rate. Other alternative minor substrates include (2E)-butenoyl-CoA/crotonoyl-CoA. The polypeptide is Propionyl-CoA carboxylase alpha chain, mitochondrial (Homo sapiens (Human)).